A 1501-amino-acid polypeptide reads, in one-letter code: RE1-silencing transcription factor A (1501 aa).

Residues 158–180 (FRCKPCQYKAESEEEFVHHIKIH) form a C2H2-type 1 zinc finger. Over residues 186–200 (VDNDSKKNPQGKEAD) the composition is skewed to basic and acidic residues. Residues 186 to 209 (VDNDSKKNPQGKEADSSIPEESDI) are disordered. 7 C2H2-type zinc fingers span residues 214 to 236 (IQCDGCGYNTNRFDHYLAHLKHH), 246 to 268 (YKCTICTYSTVSEYHWKKHLRNH), 274 to 296 (YTCSQCSYFSDRKNNYIQHIRTH), 302 to 324 (YQCIICLYSSSQKTHLTRHMRTH), 330 to 353 (FKCEQCSYVASNQHEVTRHARQVH), 359 to 381 (LTCPHCDYKTADRSNFKKHVELH), and 387 to 410 (FLCPVCDYAASKKCNLQYHIKSRH). Disordered regions lie at residues 491-514 (SSTQKKIKASEVRPEKIVDKSRKS), 569-612 (SFVK…SVAS), 885-929 (PTKV…VPGD), and 1040-1079 (VAAGDEPTSVQPLSREDPKSVQPIGEDQPTSVQPPGGDEQ). Basic and acidic residues-rich tracts occupy residues 498-512 (KASEVRPEKIVDKSR) and 594-605 (ITEKKEKGKQLD). Polar residues predominate over residues 1067–1079 (QPTSVQPPGGDEQ). The segment at 1463 to 1485 (FVCIFCDRTFRKEEEYTKHLRRH) adopts a C2H2-type 9 zinc-finger fold.

It is found in the nucleus. The protein localises to the cytoplasm. In terms of biological role, transcriptional repressor which binds neuron-restrictive silencer element (NRSE) and represses neuronal gene transcription in non-neuronal cells. Plays a role in the early development of the nervous system and is required for proper patterning of the neuroectoderm during gastrulation. This involves the correct speciation of the neuroepithelial domain and adequate development of the non-neural ectoderm. This chain is RE1-silencing transcription factor A (rest-a), found in Xenopus laevis (African clawed frog).